Here is a 263-residue protein sequence, read N- to C-terminus: 3-methyl-2-oxobutanoate hydroxymethyltransferase (263 aa).

Aspartate 45 and aspartate 84 together coordinate Mg(2+). 3-methyl-2-oxobutanoate contacts are provided by residues 45 to 46 (DS), aspartate 84, and lysine 112. Glutamate 114 is a binding site for Mg(2+). Glutamate 181 serves as the catalytic Proton acceptor.

This sequence belongs to the PanB family. In terms of assembly, homodecamer; pentamer of dimers. Mg(2+) serves as cofactor.

It is found in the cytoplasm. It carries out the reaction 3-methyl-2-oxobutanoate + (6R)-5,10-methylene-5,6,7,8-tetrahydrofolate + H2O = 2-dehydropantoate + (6S)-5,6,7,8-tetrahydrofolate. It participates in cofactor biosynthesis; (R)-pantothenate biosynthesis; (R)-pantoate from 3-methyl-2-oxobutanoate: step 1/2. Its function is as follows. Catalyzes the reversible reaction in which hydroxymethyl group from 5,10-methylenetetrahydrofolate is transferred onto alpha-ketoisovalerate to form ketopantoate. This Chromohalobacter salexigens (strain ATCC BAA-138 / DSM 3043 / CIP 106854 / NCIMB 13768 / 1H11) protein is 3-methyl-2-oxobutanoate hydroxymethyltransferase.